The sequence spans 109 residues: uncharacterized protein (109 aa).

The chain crosses the membrane as a helical span at residues 78–98 (YTCIMYIGLLCMFVLLYMTVI).

The protein localises to the membrane. This is an uncharacterized protein from Saccharomyces cerevisiae (strain ATCC 204508 / S288c) (Baker's yeast).